A 758-amino-acid polypeptide reads, in one-letter code: Microtubule-associated protein tau (758 aa).

Residues 1–26 are compositionally biased toward basic and acidic residues; the sequence is MAEPRQEFEVMEDHAGTYGLGDRKDQ. The interval 1–573 is disordered; that stretch reads MAEPRQEFEV…PVPMPDLKNV (573 aa). Ala2 bears the N-acetylalanine mark. Phosphotyrosine; by FYN is present on Tyr18. Phosphotyrosine is present on Tyr29. A Glycyl lysine isopeptide (Lys-Gly) (interchain with G-Cter in ubiquitin) cross-link involves residue Lys44. Ser46 and Ser61 each carry phosphoserine. A compositionally biased stretch (polar residues) spans 61–71; the sequence is SETSDAKSTPT. Thr69 and Thr71 each carry phosphothreonine. A glycan (N-linked (Glc) (glycation) lysine; in PHF-tau; in vitro) is linked at Lys87. Thr111 bears the Phosphothreonine mark. Basic and acidic residues-rich tracts occupy residues 179–189 and 207–216; these read EGGRHAPELLK and GGKERPGSKE. Phosphoserine; by SGK1 is present on Ser214. Positions 217-228 are enriched in acidic residues; that stretch reads EVDEDRDVDESS. The segment covering 314–323 has biased composition (basic and acidic residues); the sequence is EQAHSEEHLG. The span at 324-340 shows a compositional bias: low complexity; that stretch reads RAAFPGAPGEGPEARGP. Basic and acidic residues-rich tracts occupy residues 344 to 356 and 381 to 393; these read EDTKEADLPEPSE and KSKDGTGSDDKKA. N-linked (Glc) (glycation) lysine; in PHF-tau; in vitro glycosylation occurs at Lys383. The span at 442–453 shows a compositional bias: low complexity; the sequence is VSSVTSRTGSSG. Basic and acidic residues predominate over residues 455 to 466; sequence KEMKLKGADGKT. N-linked (Glc) (glycation) lysine; in PHF-tau; in vitro glycosylation is present at Lys467. Thr470 carries the post-translational modification Phosphothreonine; by PDPK1. Residue Arg472 is modified to Omega-N-methylarginine. An N-linked (Glc) (glycation) lysine; in PHF-tau; in vitro glycan is attached at Lys480. The residue at position 480 (Lys480) is an N6,N6-dimethyllysine; alternate. At Lys480 the chain carries N6-acetyllysine; alternate. At Asn484 the chain carries Deamidated asparagine; in tau and PHF-tau; partial. Phosphothreonine is present on Thr486. Lys491 is a glycosylation site (N-linked (Glc) (glycation) lysine; in PHF-tau; in vitro). Residues 491–503 are compositionally biased toward pro residues; that stretch reads KTPPAPKTPPSSG. Thr492 carries the post-translational modification Phosphothreonine. A Phosphothreonine; by PDPK1 modification is found at Thr498. Residues Ser502, Ser508, and Ser512 each carry the phosphoserine modification. Over residues 504–531 the composition is skewed to low complexity; it reads EPPKSGDRSGYSSPGSPGTPGSRSRTPS. At Tyr514 the chain carries Phosphotyrosine; by TTBK1. Phosphoserine; by PDPK1 and TTBK1 occurs at positions 515 and 516. Ser519 is subject to Phosphoserine; by CK1, PDPK1 and TTBK1. Phosphothreonine; by CK1 and PDPK1 is present on Thr522. O-linked (GlcNAc) serine glycosylation is present at Ser525. Thr529 is modified (phosphothreonine; by BRSK1, BRSK2, DYRK2 and PDPK1). Ser531 bears the Phosphoserine; by PKA mark. Thr534 bears the Phosphothreonine; by PDPK1 mark. A glycan (N-linked (Glc) (glycation) lysine; in PHF-tau; in vitro) is linked at Lys542. Lys542 carries the N6-acetyllysine modification. Thr548 bears the Phosphothreonine; by GSK3-beta and PDPK1 mark. N-linked (Glc) (glycation) lysine; in PHF-tau; in vitro glycosylation is present at Lys551. Residue Ser552 is modified to Phosphoserine; by PDPK1. Phosphoserine; by PHK is present on Ser554. An O-linked (GlcNAc) serine glycan is attached at Ser555. 4 Tau/MAP repeats span residues 561-591, 592-622, 623-653, and 654-685; these read QTAPVPMPDLKNVKSKIGSTENLKHQPGGGK, VQIINKKLDLSNVQSKCGSKDNIKHVPGGGS, VQIVYKPVDLSKVTSKCGSLGNIHHKPGGGQ, and VEVKSEKLDFKDRVQSKIGSLDNITHVPGGGN. The segment at 561–685 is microtubule-binding domain; sequence QTAPVPMPDL…NITHVPGGGN (125 aa). Residue Lys571 forms a Glycyl lysine isopeptide (Lys-Gly) (interchain with G-Cter in ubiquitin); in PHF-tau linkage. A glycan (N-linked (Glc) (glycation) lysine; in PHF-tau; in vitro) is linked at Lys576. At Lys576 the chain carries N6-acetyllysine; alternate. Lys576 carries the N6-methyllysine; alternate modification. Residue Lys576 forms a Glycyl lysine isopeptide (Lys-Gly) (interchain with G-Cter in ubiquitin); alternate linkage. Phosphoserine; by MARK1, MARK2, MARK3, MARK4, BRSK1, BRSK2 and PHK is present on Ser579. A Glycyl lysine isopeptide (Lys-Gly) (interchain with G-Cter in ubiquitin) cross-link involves residue Lys584. A Deamidated asparagine; in tau and PHF-tau; partial modification is found at Asn596. N-linked (Glc) (glycation) lysine; in PHF-tau; in vitro glycans are attached at residues Lys597 and Lys598. Position 598 is an N6-acetyllysine; alternate (Lys598). Lys598 is covalently cross-linked (Glycyl lysine isopeptide (Lys-Gly) (interchain with G-Cter in ubiquitin); alternate). At Ser602 the chain carries Phosphoserine; by PHK. Residue Lys607 is modified to N6-acetyllysine. Cys608 and Cys639 are disulfide-bonded. A Phosphoserine modification is found at Ser610. At Lys615 the chain carries N6-acetyllysine; alternate. Residue Lys615 forms a Glycyl lysine isopeptide (Lys-Gly) (interchain with G-Cter in ubiquitin); alternate linkage. At Ser622 the chain carries Phosphoserine; by PHK. Lys628 carries the post-translational modification N6,N6-dimethyllysine; alternate. N6-acetyllysine; alternate occurs at positions 628, 634, and 638. Lys628 is covalently cross-linked (Glycyl lysine isopeptide (Lys-Gly) (interchain with G-Cter in ubiquitin); in PHF-tau). Glycyl lysine isopeptide (Lys-Gly) (interchain with G-Cter in ubiquitin); alternate cross-links involve residues Lys634 and Lys638. Ser641 carries the phosphoserine modification. N6-acetyllysine; alternate is present on residues Lys648, Lys660, and Lys664. Residues Lys648, Lys660, and Lys664 each participate in a glycyl lysine isopeptide (Lys-Gly) (interchain with G-Cter in ubiquitin); alternate cross-link. An N-linked (Glc) (glycation) lysine; in PHF-tau; in vitro glycan is attached at Lys664. Arg666 carries the post-translational modification Omega-N-methylarginine. Ser669 carries the post-translational modification Phosphoserine; by PHK. N-linked (Glc) (glycation) lysine; in PHF-tau; in vitro glycosylation occurs at Lys670. Lys670 is covalently cross-linked (Glycyl lysine isopeptide (Lys-Gly) (interchain with G-Cter in ubiquitin); in PHF-tau). Phosphoserine is present on Ser673. Lys686 carries an N-linked (Glc) (glycation) lysine; in PHF-tau; in vitro glycan. Lys686 is modified (N6-acetyllysine; alternate). Lys686 is covalently cross-linked (Glycyl lysine isopeptide (Lys-Gly) (interchain with G-Cter in ubiquitin); alternate). Residue Lys692 forms a Glycyl lysine isopeptide (Lys-Gly) (interchain with G-Cter in ubiquitin) linkage. Lys702 bears the N6-acetyllysine; alternate mark. Lys702 participates in a covalent cross-link: Glycyl lysine isopeptide (Lys-Gly) (interchain with G-Cter in ubiquitin); alternate. The residue at position 711 (Tyr711) is a Phosphotyrosine. Ser713 is modified (phosphoserine; by CK1 and PDPK1). The interval 715–734 is disordered; the sequence is VVSGDTSPRHLSNVSSTGSI. The residue at position 717 (Ser717) is a Phosphoserine; alternate. The O-linked (GlcNAc) serine; alternate glycan is linked to Ser717. Residues 718–733 are compositionally biased toward polar residues; that stretch reads GDTSPRHLSNVSSTGS. Residue Thr720 is modified to Phosphothreonine. Ser721 is modified (phosphoserine; by CK1 and PDPK1). At Ser726 the chain carries Phosphoserine. Position 733 is a phosphoserine; by CaMK2 and TTBK1 (Ser733). Phosphoserine; by PDPK1 and TTBK1 is present on Ser739. At Thr744 the chain carries Phosphothreonine; by TTBK1.

As to quaternary structure, interacts with MARK1, MARK2, MARK3 and MARK4. Interacts with PSMC2 through SQSTM1. Interacts with SQSTM1 when polyubiquitinated. Interacts with FKBP4. Binds to CSNK1D. Interacts with SGK1. Interacts with EPM2A; the interaction dephosphorylates MAPT at Ser-396. Interacts with PIN1. Interacts with LRRK2. Interacts with LRP1, leading to endocytosis; this interaction is reduced in the presence of LRPAP1/RAP. Post-translationally, phosphorylation at serine and threonine residues in S-P or T-P motifs by proline-directed protein kinases (PDPK1, CDK1, CDK5, GSK3, MAPK) (only 2-3 sites per protein in interphase, seven-fold increase in mitosis, and in the form associated with paired helical filaments (PHF-tau)), and at serine residues in K-X-G-S motifs by MAP/microtubule affinity-regulating kinase (MARK1, MARK2, MARK3 or MARK4), causing detachment from microtubules, and their disassembly. Phosphorylation decreases with age. Phosphorylation within tau/MAP's repeat domain or in flanking regions seems to reduce tau/MAP's interaction with, respectively, microtubules or plasma membrane components. Phosphorylation on Ser-610, Ser-622, Ser-641 and Ser-673 in several isoforms during mitosis. Phosphorylation at Ser-548 by GSK3B reduces ability to bind and stabilize microtubules. Phosphorylation at Ser-579 by BRSK1 and BRSK2 in neurons affects ability to bind microtubules and plays a role in neuron polarization. Phosphorylated at Ser-554, Ser-579, Ser-602, Ser-606 and Ser-669 by PHK. Phosphorylation at Ser-214 by SGK1 mediates microtubule depolymerization and neurite formation in hippocampal neurons. There is a reciprocal down-regulation of phosphorylation and O-GlcNAcylation. Phosphorylation on Ser-717 completely abolishes the O-GlcNAcylation on this site, while phosphorylation on Ser-713 and Ser-721 reduces glycosylation by a factor of 2 and 4 respectively. Phosphorylation on Ser-721 is reduced by about 41.5% by GlcNAcylation on Ser-717. Dephosphorylated at several serine and threonine residues by the serine/threonine phosphatase PPP5C. Polyubiquitinated. Requires functional TRAF6 and may provoke SQSTM1-dependent degradation by the proteasome. PHF-tau can be modified by three different forms of polyubiquitination. 'Lys-48'-linked polyubiquitination is the major form, 'Lys-6'-linked and 'Lys-11'-linked polyubiquitination also occur. In terms of processing, O-glycosylated. O-GlcNAcylation content is around 8.2%. There is reciprocal down-regulation of phosphorylation and O-GlcNAcylation. Phosphorylation on Ser-717 completely abolishes the O-GlcNAcylation on this site, while phosphorylation on Ser-713 and Ser-721 reduces O-GlcNAcylation by a factor of 2 and 4 respectively. O-GlcNAcylation on Ser-717 decreases the phosphorylation on Ser-721 by about 41.5%. Post-translationally, glycation of PHF-tau, but not normal brain TAU/MAPT. Glycation is a non-enzymatic post-translational modification that involves a covalent linkage between a sugar and an amino group of a protein molecule forming ketoamine. Subsequent oxidation, fragmentation and/or cross-linking of ketoamine leads to the production of advanced glycation endproducts (AGES). Glycation may play a role in stabilizing PHF aggregation leading to tangle formation in AD. Expressed in neurons. Isoform PNS-tau is expressed in the peripheral nervous system while the others are expressed in the central nervous system.

It localises to the cytoplasm. The protein resides in the cytosol. Its subcellular location is the cell membrane. The protein localises to the cytoskeleton. It is found in the cell projection. It localises to the axon. The protein resides in the dendrite. Its subcellular location is the secreted. Functionally, promotes microtubule assembly and stability, and might be involved in the establishment and maintenance of neuronal polarity. The C-terminus binds axonal microtubules while the N-terminus binds neural plasma membrane components, suggesting that tau functions as a linker protein between both. Axonal polarity is predetermined by TAU/MAPT localization (in the neuronal cell) in the domain of the cell body defined by the centrosome. The short isoforms allow plasticity of the cytoskeleton whereas the longer isoforms may preferentially play a role in its stabilization. The chain is Microtubule-associated protein tau from Homo sapiens (Human).